Consider the following 145-residue polypeptide: Leptin (145 aa).

The first 12 residues, 1–12 (LWLWPYLFFIEA), serve as a signal peptide directing secretion.

Belongs to the leptin family.

Its subcellular location is the secreted. Functionally, key player in the regulation of energy balance and body weight control. Once released into the circulation, has central and peripheral effects by binding LEPR, found in many tissues, which results in the activation of several major signaling pathways. In the hypothalamus, acts as an appetite-regulating factor that induces a decrease in food intake and an increase in energy consumption by inducing anorexinogenic factors and suppressing orexigenic neuropeptides, also regulates bone mass and secretion of hypothalamo-pituitary-adrenal hormones. In the periphery, increases basal metabolism, influences reproductive function, regulates pancreatic beta-cell function and insulin secretion, is pro-angiogenic for endothelial cell and affects innate and adaptive immunity. In the arcuate nucleus of the hypothalamus, activates by depolarization POMC neurons inducing FOS and SOCS3 expression to release anorexigenic peptides and inhibits by hyperpolarization NPY neurons inducing SOCS3 with a consequent reduction on release of orexigenic peptides. In addition to its known satiety inducing effect, has a modulatory role in nutrient absorption. In the intestine, reduces glucose absorption by enterocytes by activating PKC and leading to a sequential activation of p38, PI3K and ERK signaling pathways which exerts an inhibitory effect on glucose absorption. Acts as a growth factor on certain tissues, through the activation of different signaling pathways increases expression of genes involved in cell cycle regulation such as CCND1, via JAK2-STAT3 pathway, or VEGFA, via MAPK1/3 and PI3K-AKT1 pathways. May also play an apoptotic role via JAK2-STAT3 pathway and up-regulation of BIRC5 expression. Pro-angiogenic, has mitogenic activity on vascular endothelial cells and plays a role in matrix remodeling by regulating the expression of matrix metalloproteinases (MMPs) and tissue inhibitors of metalloproteinases (TIMPs). In innate immunity, modulates the activity and function of neutrophils by increasing chemotaxis and the secretion of oxygen radicals. Increases phagocytosis by macrophages and enhances secretion of pro-inflammatory mediators. Increases cytotoxic ability of NK cells. Plays a pro-inflammatory role, in synergy with IL1B, by inducing NOS2 which promotes the production of IL6, IL8 and Prostaglandin E2, through a signaling pathway that involves JAK2, PI3K, MAP2K1/MEK1 and MAPK14/p38. In adaptive immunity, promotes the switch of memory T-cells towards T helper-1 cell immune responses. Increases CD4(+)CD25(-) T-cell proliferation and reduces autophagy during TCR (T-cell receptor) stimulation, through MTOR signaling pathway activation and BCL2 up-regulation. This Equus caballus (Horse) protein is Leptin (LEP).